A 331-amino-acid chain; its full sequence is Homoserine O-succinyltransferase (331 aa).

Residue Cys-141 is the Acyl-thioester intermediate of the active site. Lys-162 and Ser-190 together coordinate substrate. Catalysis depends on His-233, which acts as the Proton acceptor. Glu-235 is an active-site residue. Arg-247 contacts substrate.

It belongs to the MetA family.

It is found in the cytoplasm. The enzyme catalyses L-homoserine + succinyl-CoA = O-succinyl-L-homoserine + CoA. It functions in the pathway amino-acid biosynthesis; L-methionine biosynthesis via de novo pathway; O-succinyl-L-homoserine from L-homoserine: step 1/1. Functionally, transfers a succinyl group from succinyl-CoA to L-homoserine, forming succinyl-L-homoserine. This is Homoserine O-succinyltransferase from Methylorubrum extorquens (strain DSM 6343 / CIP 106787 / DM4) (Methylobacterium extorquens).